The sequence spans 291 residues: ATP synthase gamma chain (291 aa).

The protein belongs to the ATPase gamma chain family. As to quaternary structure, F-type ATPases have 2 components, CF(1) - the catalytic core - and CF(0) - the membrane proton channel. CF(1) has five subunits: alpha(3), beta(3), gamma(1), delta(1), epsilon(1). CF(0) has three main subunits: a, b and c.

It localises to the cell inner membrane. In terms of biological role, produces ATP from ADP in the presence of a proton gradient across the membrane. The gamma chain is believed to be important in regulating ATPase activity and the flow of protons through the CF(0) complex. In Methylobacillus flagellatus (strain ATCC 51484 / DSM 6875 / VKM B-1610 / KT), this protein is ATP synthase gamma chain.